The chain runs to 116 residues: L-amino-acid oxidase BjussuLAAO-II (116 aa).

42–45 provides a ligand contact to FAD; that stretch reads GPMR. Substrate-binding residues include Arg45 and His78.

This sequence belongs to the flavin monoamine oxidase family. FIG1 subfamily. Homodimer; non-covalently linked. FAD is required as a cofactor. Post-translationally, glycosylated. As to expression, expressed by the venom gland.

The protein localises to the secreted. The catalysed reaction is an L-alpha-amino acid + O2 + H2O = a 2-oxocarboxylate + H2O2 + NH4(+). It carries out the reaction L-leucine + O2 + H2O = 4-methyl-2-oxopentanoate + H2O2 + NH4(+). The enzyme catalyses L-phenylalanine + O2 + H2O = 3-phenylpyruvate + H2O2 + NH4(+). It catalyses the reaction L-methionine + O2 + H2O = 4-methylsulfanyl-2-oxobutanoate + H2O2 + NH4(+). The catalysed reaction is L-isoleucine + O2 + H2O = (S)-3-methyl-2-oxopentanoate + H2O2 + NH4(+). It carries out the reaction L-histidine + O2 + H2O = 3-(imidazol-5-yl)pyruvate + H2O2 + NH4(+). The enzyme catalyses L-tyrosine + O2 + H2O = 3-(4-hydroxyphenyl)pyruvate + H2O2 + NH4(+). It catalyses the reaction L-tryptophan + O2 + H2O = indole-3-pyruvate + H2O2 + NH4(+). With respect to regulation, its enzymatic activities is reduced by the presence of Zn(2+), Al(3+), Cu(2+), Na(+) or Ni(2+) salts. Functionally, catalyzes an oxidative deamination of predominantly hydrophobic and aromatic L-amino acids, thus producing hydrogen peroxide that may contribute to the diverse toxic effects of this enzyme. Shows very high enzymatic activity on L-Met and L-Leu, high activity on L-Ile, L-Phe and L-Tyr and moderate activity on L-His. Exhibits diverse biological activities, such as hemorrhage, hemolysis, edema, apoptosis of vascular endothelial cells or tumor cell lines, and antibacterial, as well as regulation of platelet aggregation. Effects of snake L-amino oxidases on platelets are controversial, since they either induce aggregation or inhibit agonist-induced aggregation. These different effects are probably due to different experimental conditions. In vitro, has a strong antiprotozoal effect against Leishmania amazonensis (IC(50)=4.56 ug/mL) and Trypanosoma cruzi (IC(50)=4.85 ug/mL). It also causes cell death and DNA damage in hepatocarcinoma cells (HepG2) in vitro by inducing oxidative stress. It exerts cytotoxicity towards colorectal adenocarcinomahuman cells (Caco-2) by acting on multiple intracellular targets. It diminishes cell viability by decreasing mitochondrial activity, the activity of acid phosphatases, and lysosomal function. In addition, it increases intracellular levels of reactive oxygen species and DNA damage, it elevates the expression of the pro-inflammatory cytokine genes TNF and IL6, and lowers the expression of the apoptotic-related genes. Also induces cytotoxicity (IC(50)=1.80 ug/mL) and apoptosis in MCF-7 cells (a human breast adeno-carcinoma cell line) by activating the intrinsic and extrinsic apoptosis pathways, but are not cytotoxic towards MCF-10A cells (a non-tumorigenic human breast epithelial cell line). The chain is L-amino-acid oxidase BjussuLAAO-II from Bothrops jararacussu (Jararacussu).